We begin with the raw amino-acid sequence, 134 residues long: MMDIFNALDISASGMYAQRIRMNTVASNLANYESFKSDGTPFNRLVPVFEAVENLEDPSEVYVNVREIREVPGFKLIYDPENPNADERGYVRLPNIEPVKEMVDMITAVRSYEANLKAFSLTKEIFERTFEAWK.

This sequence belongs to the flagella basal body rod proteins family. The basal body constitutes a major portion of the flagellar organelle and consists of four rings (L,P,S, and M) mounted on a central rod. The rod consists of about 26 subunits of FlgG in the distal portion, and FlgB, FlgC and FlgF are thought to build up the proximal portion of the rod with about 6 subunits each.

It is found in the bacterial flagellum basal body. The chain is Flagellar basal-body rod protein FlgC (flgC) from Aquifex aeolicus (strain VF5).